The sequence spans 239 residues: ATP synthase subunit a, chloroplastic (239 aa).

Helical transmembrane passes span 30–50, 87–107, 126–146, 191–211, and 212–232; these read VLLV…LGTF, VPFI…GALV, INTT…AGLS, LVVA…VMVL, and GLFA…SYIG.

It belongs to the ATPase A chain family. As to quaternary structure, F-type ATPases have 2 components, CF(1) - the catalytic core - and CF(0) - the membrane proton channel. CF(1) has five subunits: alpha(3), beta(3), gamma(1), delta(1), epsilon(1). CF(0) has four main subunits: a, b, b' and c.

It is found in the plastid. Its subcellular location is the chloroplast thylakoid membrane. Functionally, key component of the proton channel; it plays a direct role in the translocation of protons across the membrane. This chain is ATP synthase subunit a, chloroplastic, found in Cyanidium caldarium (Red alga).